A 273-amino-acid polypeptide reads, in one-letter code: Ribosomal RNA small subunit methyltransferase A (273 aa).

Asn18, Leu20, Gly45, Glu66, Asp91, and Asn113 together coordinate S-adenosyl-L-methionine.

This sequence belongs to the class I-like SAM-binding methyltransferase superfamily. rRNA adenine N(6)-methyltransferase family. RsmA subfamily.

The protein resides in the cytoplasm. The catalysed reaction is adenosine(1518)/adenosine(1519) in 16S rRNA + 4 S-adenosyl-L-methionine = N(6)-dimethyladenosine(1518)/N(6)-dimethyladenosine(1519) in 16S rRNA + 4 S-adenosyl-L-homocysteine + 4 H(+). Functionally, specifically dimethylates two adjacent adenosines (A1518 and A1519) in the loop of a conserved hairpin near the 3'-end of 16S rRNA in the 30S particle. May play a critical role in biogenesis of 30S subunits. The polypeptide is Ribosomal RNA small subunit methyltransferase A (Shigella dysenteriae serotype 1 (strain Sd197)).